A 476-amino-acid polypeptide reads, in one-letter code: Amidophosphoribosyltransferase (476 aa).

A propeptide spanning residues 1–11 (MLAEIKGLNEE) is cleaved from the precursor. Cysteine 12 serves as the catalytic Nucleophile. Residues 12-231 (CGVFGIWGHE…PGEMLIINDE (220 aa)) form the Glutamine amidotransferase type-2 domain. Residue cysteine 247 coordinates [4Fe-4S] cluster. Positions 294, 356, and 357 each coordinate Mg(2+). Cysteine 393, cysteine 448, and cysteine 451 together coordinate [4Fe-4S] cluster.

In the C-terminal section; belongs to the purine/pyrimidine phosphoribosyltransferase family. In terms of assembly, homotetramer. The cofactor is Mg(2+). [4Fe-4S] cluster is required as a cofactor.

The catalysed reaction is 5-phospho-beta-D-ribosylamine + L-glutamate + diphosphate = 5-phospho-alpha-D-ribose 1-diphosphate + L-glutamine + H2O. It participates in purine metabolism; IMP biosynthesis via de novo pathway; N(1)-(5-phospho-D-ribosyl)glycinamide from 5-phospho-alpha-D-ribose 1-diphosphate: step 1/2. With respect to regulation, allosterically regulated; subject to end product regulation by purine nucleotides. Functionally, catalyzes the formation of phosphoribosylamine from phosphoribosylpyrophosphate (PRPP) and glutamine. The polypeptide is Amidophosphoribosyltransferase (Bacillus subtilis (strain 168)).